Reading from the N-terminus, the 81-residue chain is Small ribosomal subunit protein bS16 (81 aa).

This sequence belongs to the bacterial ribosomal protein bS16 family.

In Caldicellulosiruptor saccharolyticus (strain ATCC 43494 / DSM 8903 / Tp8T 6331), this protein is Small ribosomal subunit protein bS16.